Consider the following 99-residue polypeptide: MALTVETKKRPEGSKPKALRRAGFIPANLYGHNGRESISLVVDAKVVERLLKAAAVKKTEIELNIPELEWTGKTILQEVQIHPAKGTPYHISFLATAKG.

It belongs to the bacterial ribosomal protein bL25 family. Part of the 50S ribosomal subunit; part of the 5S rRNA/L5/L18/L25 subcomplex. Contacts the 5S rRNA. Binds to the 5S rRNA independently of L5 and L18.

In terms of biological role, this is one of the proteins that binds to the 5S RNA in the ribosome where it forms part of the central protuberance. The sequence is that of Large ribosomal subunit protein bL25 from Nostoc sp. (strain PCC 7120 / SAG 25.82 / UTEX 2576).